We begin with the raw amino-acid sequence, 666 residues long: MSDSHLTAFDKASKAGFIIALGIVYGDIGTSPLYTMQSLVENQGGVNQVSESFILGSISLIIWTLTLITTIKYVLIALKADNHHEGGIFSLFTLVRKMSPWLIIPAMIGGATLLSDGALTPAVTVTSAIEGLKAVPGLSHIYQNQTNVIITTLVILIVLFGIQRFGTGFIGKIFGPVMFIWFSFLGVSGFFNTLGHLEIFKAINPYYALHLLFSPENHRGIFILGSIFLATTGAEALYSDLGHVGRGNIYVSWPFVKVCIVLSYCGQAAWILANKHSGIELNPFFASVPSQLRVYLVSLATLAAIIASQALISGSFTLVSEAMRLKIFPLFRVTYPGANLGQLYIPVINWILFAVTSCTVLYFRTSAHMEAAYGLAITITMLMTTILLNYYLIKEGVKPFLAHLVMTFFALVEFIFFWASAVKFMHGGYVVVILALAIVFVMFIWHAGTRIVFKYVKSLNLNDYKEQIKQLRDDVCFDLYQTNVVYLSNRMQDYMIDRSILYSILDKRPKRARVYWFVNVQVTDEPYTAKYKVDMMGTDYMVRVNLYLGFRMPQTVPRYLRTIVQDLMESGRLPKQEQEYTITPGRDVGDFRFVLIEERVSNARQLSNFERFIMQTKASIKHVTASPMRWFGLQYSEVTLEVVPLILSDVLKLPIKELVPVEDSEA.

Helical transmembrane passes span 16 to 36 (GFII…LYTM), 58 to 78 (ISLI…LIAL), 100 to 120 (PWLI…GALT), 141 to 161 (IYQN…VLFG), 165 to 185 (FGTG…FSFL), 221 to 241 (IFIL…YSDL), 253 to 273 (WPFV…WILA), 294 to 314 (VYLV…LISG), 343 to 363 (LYIP…VLYF), 373 to 393 (YGLA…YYLI), 399 to 419 (PFLA…FFWA), and 424 to 444 (FMHG…VMFI).

It belongs to the HAK/KUP transporter (TC 2.A.72) family.

The protein resides in the cell membrane. The catalysed reaction is K(+)(in) + H(+)(in) = K(+)(out) + H(+)(out). Functionally, transport of potassium into the cell. Likely operates as a K(+):H(+) symporter. The chain is Probable potassium transport system protein Kup from Streptococcus pyogenes serotype M6 (strain ATCC BAA-946 / MGAS10394).